A 293-amino-acid polypeptide reads, in one-letter code: Deubiquitinase OTUD6B (293 aa).

Disordered stretches follow at residues 1–43 (MEEV…RRKQ) and 57–114 (QKHE…LEKE). An OTU domain is found at 147–284 (LQIKEISSDG…GEHYNSVEPL (138 aa)). The segment at 152–158 (ISSDGHC) is cys-loop. Aspartate 155 is an active-site residue. Residue cysteine 158 is the Nucleophile of the active site. The segment at 219–229 (VADTAAWGGQL) is variable-loop. The segment at 267–277 (YMRHAYGLGEH) is his-loop. The active site involves histidine 277.

The catalysed reaction is Thiol-dependent hydrolysis of ester, thioester, amide, peptide and isopeptide bonds formed by the C-terminal Gly of ubiquitin (a 76-residue protein attached to proteins as an intracellular targeting signal).. Deubiquitinating enzyme that may play a role in the ubiquitin-dependent regulation of different cellular processes. This chain is Deubiquitinase OTUD6B (otud6b), found in Danio rerio (Zebrafish).